We begin with the raw amino-acid sequence, 513 residues long: Bifunctional purine biosynthesis protein PurH (513 aa).

The region spanning 1 to 144 (MKRALISVSD…KNYQDVTVVT (144 aa)) is the MGS-like domain.

The protein belongs to the PurH family.

It catalyses the reaction (6R)-10-formyltetrahydrofolate + 5-amino-1-(5-phospho-beta-D-ribosyl)imidazole-4-carboxamide = 5-formamido-1-(5-phospho-D-ribosyl)imidazole-4-carboxamide + (6S)-5,6,7,8-tetrahydrofolate. The catalysed reaction is IMP + H2O = 5-formamido-1-(5-phospho-D-ribosyl)imidazole-4-carboxamide. It functions in the pathway purine metabolism; IMP biosynthesis via de novo pathway; 5-formamido-1-(5-phospho-D-ribosyl)imidazole-4-carboxamide from 5-amino-1-(5-phospho-D-ribosyl)imidazole-4-carboxamide (10-formyl THF route): step 1/1. The protein operates within purine metabolism; IMP biosynthesis via de novo pathway; IMP from 5-formamido-1-(5-phospho-D-ribosyl)imidazole-4-carboxamide: step 1/1. In Lactobacillus acidophilus (strain ATCC 700396 / NCK56 / N2 / NCFM), this protein is Bifunctional purine biosynthesis protein PurH.